A 452-amino-acid polypeptide reads, in one-letter code: GTPase Obg (452 aa).

In terms of domain architecture, Obg spans 1-158 (MFIDRAKIYV…KWIVLELKVM (158 aa)). Disordered regions lie at residues 66 to 87 (GKRGEHGQGSNQHGKSGQDKVI) and 117 to 143 (AEGGRGGRGNTRFANPKNKAPRFSEDG). Residues 159–338 (AEVGLIGYPN…LLDFVAEKVA (180 aa)) form the OBG-type G domain. Residues 165 to 172 (GYPNVGKS), 190 to 194 (FTTLN), 212 to 215 (DIPG), 282 to 285 (NKMD), and 319 to 321 (SAA) each bind GTP. Mg(2+) is bound by residues Ser172 and Thr192. Positions 376-452 (IEEKPKSDFG…KIGNVEFEYQ (77 aa)) constitute an OCT domain.

This sequence belongs to the TRAFAC class OBG-HflX-like GTPase superfamily. OBG GTPase family. As to quaternary structure, monomer. The cofactor is Mg(2+).

The protein localises to the cytoplasm. Its function is as follows. An essential GTPase which binds GTP, GDP and possibly (p)ppGpp with moderate affinity, with high nucleotide exchange rates and a fairly low GTP hydrolysis rate. Plays a role in control of the cell cycle, stress response, ribosome biogenesis and in those bacteria that undergo differentiation, in morphogenesis control. This chain is GTPase Obg, found in Natranaerobius thermophilus (strain ATCC BAA-1301 / DSM 18059 / JW/NM-WN-LF).